The sequence spans 403 residues: Argininosuccinate synthase (403 aa).

Residues 13–21 and A40 each bind ATP; that span reads AYSGGLDTS. Y92 and S97 together coordinate L-citrulline. G122 is an ATP binding site. The L-aspartate site is built by T124, N128, and D129. N128 is a binding site for L-citrulline. Residues R132, S181, S190, E266, and Y278 each coordinate L-citrulline.

It belongs to the argininosuccinate synthase family. Type 1 subfamily. Homotetramer.

The protein localises to the cytoplasm. It carries out the reaction L-citrulline + L-aspartate + ATP = 2-(N(omega)-L-arginino)succinate + AMP + diphosphate + H(+). The protein operates within amino-acid biosynthesis; L-arginine biosynthesis; L-arginine from L-ornithine and carbamoyl phosphate: step 2/3. The sequence is that of Argininosuccinate synthase from Aliivibrio salmonicida (strain LFI1238) (Vibrio salmonicida (strain LFI1238)).